A 260-amino-acid chain; its full sequence is Hydroxyethylthiazole kinase 1 (260 aa).

Met-39 serves as a coordination point for substrate. ATP is bound by residues Arg-115 and Thr-160. Gly-187 lines the substrate pocket.

This sequence belongs to the Thz kinase family. Mg(2+) is required as a cofactor.

It carries out the reaction 5-(2-hydroxyethyl)-4-methylthiazole + ATP = 4-methyl-5-(2-phosphooxyethyl)-thiazole + ADP + H(+). It participates in cofactor biosynthesis; thiamine diphosphate biosynthesis; 4-methyl-5-(2-phosphoethyl)-thiazole from 5-(2-hydroxyethyl)-4-methylthiazole: step 1/1. Functionally, catalyzes the phosphorylation of the hydroxyl group of 4-methyl-5-beta-hydroxyethylthiazole (THZ). The sequence is that of Hydroxyethylthiazole kinase 1 from Streptococcus pneumoniae serotype 2 (strain D39 / NCTC 7466).